Here is a 255-residue protein sequence, read N- to C-terminus: MYSSYSLFKCLVCFYILGIQVLIHSVSSQNLTNAYLHHKCLTRQGKYKPRSPYEENLNYLIDHISKYHFRDGFRHSAGEAPNSGNFVFQCRGDSYGSICGSCYATAVAGLRKRCQRYKGAIIWYDQCFLKVSTINSPPTKMDYENTFSMHNPNNINGDTQLFNQKMKNFLYELALKADKPKADGTGLLYYAAGTKRLGKNKLYAMVQCTLDIFHCKVCLEWSIKELSKCCEGKQGARVLGTSCNVRYELYPFIRT.

Positions 1–28 (MYSSYSLFKCLVCFYILGIQVLIHSVSS) are cleaved as a signal peptide. Gnk2-homologous domains are found at residues 35–136 (YLHH…TINS) and 143–252 (YENT…LYPF).

Belongs to the cysteine-rich repeat secretory protein family.

Its subcellular location is the secreted. In Arabidopsis thaliana (Mouse-ear cress), this protein is Putative cysteine-rich repeat secretory protein 32 (CRRSP32).